Here is a 1647-residue protein sequence, read N- to C-terminus: Transcription elongation factor SPT6 homolog (1647 aa).

Residues 1 to 209 (MARNAISDDE…SKKKKYRQGS (209 aa)) are disordered. Acidic residues predominate over residues 7–20 (SDDEEDHELEDDDG). Over residues 21–30 (EPVHGDPAEH) the composition is skewed to basic and acidic residues. The span at 31-67 (DENDDEEDDDDVGNEYENDGFIVNDEDEEEEEEEDEE) shows a compositional bias: acidic residues. Basic residues predominate over residues 103–114 (KFKKRQYKRLKK). A compositionally biased stretch (basic and acidic residues) spans 132-151 (DSRGGTRRSAEDKIKDRLFD). A compositionally biased stretch (acidic residues) spans 152–191 (DVDVDDPPDDVGDEEDLVVEEDVVGSEDEMADFIVDEDDE). Residues 1103–1174 (GRIVQASVRR…QRYQVFLICK (72 aa)) enclose the S1 motif domain. The interval 1429 to 1647 (PMRSPADHGS…RKSDGGGGGW (219 aa)) is disordered. Repeat copies occupy residues 1443–1444 (GW) and 1452–1453 (GW). Residues 1443 to 1647 (GWGSSQSEGG…RKSDGGGGGW (205 aa)) form a 12 X 2 AA repeats of [WG]-[GW] repeats region. Residues 1462–1471 (SGRGGEYRNG) are compositionally biased toward gly residues. Residues 1496 to 1507 (RRDDMNSDRQDG) are compositionally biased toward basic and acidic residues. 6 consecutive repeat copies span residues 1511-1512 (WG), 1522-1523 (GW), 1530-1531 (GW), 1547-1548 (GW), 1563-1564 (WG), and 1574-1575 (GW). 4 stretches are compositionally biased toward gly residues: residues 1519–1532 (ADGGWGNSGGGGWG), 1539–1552 (KTGGGSTGGWGSES), 1561–1579 (GSWGSGSGGGGSGGWGNDS), and 1588–1600 (GGFGSGSGGGGSD). 4 consecutive repeat copies span residues 1601-1602 (WG), 1615-1616 (GW), 1630-1631 (GW), and 1646-1647 (GW).

Belongs to the SPT6 family. Interacts (via N-terminus) with IWS1. Expressed in shoot apical meristem, leaf primordia, vasculature of young leaves, inflorescence meristem, floral meristem, young floral organs, developing ovules and anthers.

The protein resides in the nucleus. Functionally, transcription elongation factor that enhances the transcription elongation by RNA polymerase II (RNAPII). Plays an important role in regulating embryo apical and basal patterning during early embryogenesis, partly through negative regulation of the transcription factors PHABULOSA and PHAVOLUTA. This chain is Transcription elongation factor SPT6 homolog, found in Arabidopsis thaliana (Mouse-ear cress).